The primary structure comprises 144 residues: D-aminoacyl-tRNA deacylase (144 aa).

The short motif at 136 to 137 (GP) is the Gly-cisPro motif, important for rejection of L-amino acids element.

Belongs to the DTD family. As to quaternary structure, homodimer.

Its subcellular location is the cytoplasm. The enzyme catalyses glycyl-tRNA(Ala) + H2O = tRNA(Ala) + glycine + H(+). It carries out the reaction a D-aminoacyl-tRNA + H2O = a tRNA + a D-alpha-amino acid + H(+). An aminoacyl-tRNA editing enzyme that deacylates mischarged D-aminoacyl-tRNAs. Also deacylates mischarged glycyl-tRNA(Ala), protecting cells against glycine mischarging by AlaRS. Acts via tRNA-based rather than protein-based catalysis; rejects L-amino acids rather than detecting D-amino acids in the active site. By recycling D-aminoacyl-tRNA to D-amino acids and free tRNA molecules, this enzyme counteracts the toxicity associated with the formation of D-aminoacyl-tRNA entities in vivo and helps enforce protein L-homochirality. The chain is D-aminoacyl-tRNA deacylase from Haemophilus influenzae (strain 86-028NP).